A 38-amino-acid polypeptide reads, in one-letter code: uncharacterized protein (38 aa).

The chain crosses the membrane as a helical span at residues 10 to 32 (FSLLWYFLVGGGKGEVCWRFLGI).

It localises to the membrane. This is an uncharacterized protein from Saccharomyces cerevisiae (strain ATCC 204508 / S288c) (Baker's yeast).